Here is a 209-residue protein sequence, read N- to C-terminus: dITP/XTP pyrophosphatase (209 aa).

7 to 12 (SSHGYK) is a substrate binding site. Catalysis depends on Asp-70, which acts as the Proton acceptor. Asp-70 contributes to the Mg(2+) binding site. Substrate-binding positions include Ser-71, 154-157 (FGYD), Lys-177, and 182-183 (HR).

This sequence belongs to the HAM1 NTPase family. Homodimer. Mg(2+) serves as cofactor.

The enzyme catalyses XTP + H2O = XMP + diphosphate + H(+). The catalysed reaction is dITP + H2O = dIMP + diphosphate + H(+). It carries out the reaction ITP + H2O = IMP + diphosphate + H(+). Functionally, pyrophosphatase that catalyzes the hydrolysis of nucleoside triphosphates to their monophosphate derivatives, with a high preference for the non-canonical purine nucleotides XTP (xanthosine triphosphate), dITP (deoxyinosine triphosphate) and ITP. Seems to function as a house-cleaning enzyme that removes non-canonical purine nucleotides from the nucleotide pool, thus preventing their incorporation into DNA/RNA and avoiding chromosomal lesions. This is dITP/XTP pyrophosphatase from Chlamydia muridarum (strain MoPn / Nigg).